A 588-amino-acid chain; its full sequence is Adenine deaminase (588 aa).

Belongs to the metallo-dependent hydrolases superfamily. Adenine deaminase family. In terms of assembly, homodimer. Mn(2+) serves as cofactor.

It carries out the reaction adenine + H2O + H(+) = hypoxanthine + NH4(+). This is Adenine deaminase from Escherichia coli O157:H7 (strain EC4115 / EHEC).